Here is a 204-residue protein sequence, read N- to C-terminus: Superoxide dismutase [Mn] (204 aa).

A Mn(2+)-binding site is contributed by histidine 27. Phosphothreonine occurs at positions 34 and 70. Residues histidine 82, aspartate 164, and histidine 168 each coordinate Mn(2+).

The protein belongs to the iron/manganese superoxide dismutase family. In terms of assembly, homodimer. Requires Mn(2+) as cofactor.

The catalysed reaction is 2 superoxide + 2 H(+) = H2O2 + O2. Its function is as follows. Destroys superoxide anion radicals which are normally produced within the cells and which are toxic to biological systems. In Geobacillus stearothermophilus (Bacillus stearothermophilus), this protein is Superoxide dismutase [Mn] (sodA).